We begin with the raw amino-acid sequence, 871 residues long: DNA mismatch repair protein MutS (871 aa).

An ATP-binding site is contributed by 618-625; that stretch reads GPNMSGKS.

Belongs to the DNA mismatch repair MutS family.

This protein is involved in the repair of mismatches in DNA. It is possible that it carries out the mismatch recognition step. This protein has a weak ATPase activity. The polypeptide is DNA mismatch repair protein MutS (Christiangramia forsetii (strain DSM 17595 / CGMCC 1.15422 / KT0803) (Gramella forsetii)).